A 251-amino-acid chain; its full sequence is Hydroxyacylglutathione hydrolase (251 aa).

Zn(2+)-binding residues include H53, H55, D57, H58, H110, D127, and H165.

This sequence belongs to the metallo-beta-lactamase superfamily. Glyoxalase II family. Monomer. It depends on Zn(2+) as a cofactor.

It carries out the reaction an S-(2-hydroxyacyl)glutathione + H2O = a 2-hydroxy carboxylate + glutathione + H(+). It functions in the pathway secondary metabolite metabolism; methylglyoxal degradation; (R)-lactate from methylglyoxal: step 2/2. Functionally, thiolesterase that catalyzes the hydrolysis of S-D-lactoyl-glutathione to form glutathione and D-lactic acid. This chain is Hydroxyacylglutathione hydrolase, found in Escherichia coli (strain SE11).